The sequence spans 367 residues: tRNA(Ile)-lysidine synthase, chloroplastic (367 aa).

64-69 is an ATP binding site; that stretch reads SGGQDS.

It belongs to the tRNA(Ile)-lysidine synthase family.

It localises to the plastid. It is found in the chloroplast. The catalysed reaction is cytidine(34) in tRNA(Ile2) + L-lysine + ATP = lysidine(34) in tRNA(Ile2) + AMP + diphosphate + H(+). In terms of biological role, ligates lysine onto the cytidine present at position 34 of the AUA codon-specific tRNA(Ile) that contains the anticodon CAU, in an ATP-dependent manner. Cytidine is converted to lysidine, thus changing the amino acid specificity of the tRNA from methionine to isoleucine. The polypeptide is tRNA(Ile)-lysidine synthase, chloroplastic (Nephroselmis olivacea (Green alga)).